A 238-amino-acid chain; its full sequence is ATP synthase subunit a (238 aa).

7 helical membrane passes run 35–55 (SNVI…TLAT), 61–81 (VPSG…SFVV), 94–114 (FLCA…VPGL), 128–148 (ALTV…AGYI), 151–171 (FMGP…ISHL), 190–210 (IVLV…MYFL), and 211–231 (FSLA…IYLK).

It belongs to the ATPase A chain family. In terms of assembly, F-type ATPases have 2 components, CF(1) - the catalytic core - and CF(0) - the membrane proton channel. CF(1) has five subunits: alpha(3), beta(3), gamma(1), delta(1), epsilon(1). CF(0) has three main subunits: a(1), b(2) and c(9-12). The alpha and beta chains form an alternating ring which encloses part of the gamma chain. CF(1) is attached to CF(0) by a central stalk formed by the gamma and epsilon chains, while a peripheral stalk is formed by the delta and b chains.

It localises to the cell inner membrane. Functionally, key component of the proton channel; it plays a direct role in the translocation of protons across the membrane. The sequence is that of ATP synthase subunit a from Solidesulfovibrio magneticus (strain ATCC 700980 / DSM 13731 / RS-1) (Desulfovibrio magneticus).